We begin with the raw amino-acid sequence, 230 residues long: Heptaprenylglyceryl phosphate synthase (230 aa).

Lys12 is a sn-glycerol 1-phosphate binding site. Positions 14 and 40 each coordinate Mg(2+). Residues 159–164, Gly189, and 209–210 contribute to the sn-glycerol 1-phosphate site; these read YIEYSG and GD.

The protein belongs to the GGGP/HepGP synthase family. Group I subfamily. As to quaternary structure, homodimer. Mg(2+) is required as a cofactor.

The catalysed reaction is sn-glycerol 1-phosphate + all-trans-heptaprenyl diphosphate = 3-heptaprenyl-sn-glycero-1-phosphate + diphosphate. It functions in the pathway membrane lipid metabolism; glycerophospholipid metabolism. Prenyltransferase that catalyzes in vivo the transfer of the heptaprenyl moiety of heptaprenyl pyrophosphate (HepPP; 35 carbon atoms) to the C3 hydroxyl of sn-glycerol-1-phosphate (G1P), producing heptaprenylglyceryl phosphate (HepGP). This reaction is an ether-bond-formation step in the biosynthesis of archaea-type G1P-based membrane lipids found in Bacillales. The sequence is that of Heptaprenylglyceryl phosphate synthase from Staphylococcus aureus (strain MRSA252).